The primary structure comprises 349 residues: Green-sensitive opsin-2 (349 aa).

At 1-36 the chain is on the extracellular side; the sequence is MNGTEGNNFYIPMSNRTGLVRSPYEYTQYYLADPWQ. N-linked (GlcNAc...) asparagine glycosylation is found at asparagine 2 and asparagine 15. A helical membrane pass occupies residues 37–61; that stretch reads FKALAFYMFFLICFGLPINVLTLLV. Topologically, residues 62–73 are cytoplasmic; that stretch reads TAQHKKLRQPLN. Residues 74 to 99 form a helical membrane-spanning segment; it reads YILVNLAFAGTIMAFFGFTVTFYCSI. The Extracellular portion of the chain corresponds to 100–113; sequence NGYMALGPTGCAIE. Cysteine 110 and cysteine 187 are disulfide-bonded. Residues 114-133 traverse the membrane as a helical segment; that stretch reads GFFATLGGQVALWSLVVLAI. Topologically, residues 134–152 are cytoplasmic; that stretch reads ERYIVVCKPMGSFKFSSNH. The helical transmembrane segment at 153 to 176 threads the bilayer; that stretch reads AMAGIAFTWVMASSCAVPPLFGWS. Topologically, residues 177–202 are extracellular; it reads RYIPEGMQTSCGPDYYTLNPEFNNES. N-linked (GlcNAc...) asparagine glycosylation occurs at asparagine 200. The chain crosses the membrane as a helical span at residues 203-230; sequence YVLYMFSCHFCVPVTTIFFTYGSLVCTV. Over 231–252 the chain is Cytoplasmic; the sequence is KAAAAQQQESESTQKAEREVTR. A helical transmembrane segment spans residues 253-276; that stretch reads MVILMVLGFLVAWVPYASFAAWIF. At 277–284 the chain is on the extracellular side; the sequence is FNRGAAFS. A helical membrane pass occupies residues 285–309; it reads AQAMAIPAFFSKASALFNPIIYVLL. Lysine 296 carries the N6-(retinylidene)lysine modification. Topologically, residues 310–349 are cytoplasmic; that stretch reads NKQFRSCMLNTLFCGKSPLGDDESSSVSTSKTEVSSVSPA. Residues 328–349 form a disordered region; it reads LGDDESSSVSTSKTEVSSVSPA. The segment covering 334 to 349 has biased composition (low complexity); the sequence is SSVSTSKTEVSSVSPA.

This sequence belongs to the G-protein coupled receptor 1 family. Opsin subfamily. Phosphorylated on some or all of the serine and threonine residues present in the C-terminal region.

Its subcellular location is the membrane. Visual pigments are the light-absorbing molecules that mediate vision. They consist of an apoprotein, opsin, covalently linked to cis-retinal. This Danio rerio (Zebrafish) protein is Green-sensitive opsin-2 (opn1mw2).